The primary structure comprises 255 residues: 4-hydroxy-tetrahydrodipicolinate reductase (255 aa).

NAD(+)-binding positions include 9 to 14 (GFKGKM), 89 to 91 (GTT), and 115 to 118 (APNF). His145 serves as the catalytic Proton donor/acceptor. His146 contacts (S)-2,3,4,5-tetrahydrodipicolinate. Residue Lys149 is the Proton donor of the active site. (S)-2,3,4,5-tetrahydrodipicolinate is bound at residue 155-156 (GT).

It belongs to the DapB family.

The protein localises to the cytoplasm. It catalyses the reaction (S)-2,3,4,5-tetrahydrodipicolinate + NAD(+) + H2O = (2S,4S)-4-hydroxy-2,3,4,5-tetrahydrodipicolinate + NADH + H(+). It carries out the reaction (S)-2,3,4,5-tetrahydrodipicolinate + NADP(+) + H2O = (2S,4S)-4-hydroxy-2,3,4,5-tetrahydrodipicolinate + NADPH + H(+). Its pathway is amino-acid biosynthesis; L-lysine biosynthesis via DAP pathway; (S)-tetrahydrodipicolinate from L-aspartate: step 4/4. In terms of biological role, catalyzes the conversion of 4-hydroxy-tetrahydrodipicolinate (HTPA) to tetrahydrodipicolinate. In Streptococcus gordonii (strain Challis / ATCC 35105 / BCRC 15272 / CH1 / DL1 / V288), this protein is 4-hydroxy-tetrahydrodipicolinate reductase.